The sequence spans 327 residues: Annexin A8 (327 aa).

Annexin repeat units lie at residues 21–92 (FNPD…ALMY), 93–164 (PPYR…CLLQ), 177–249 (GLAL…TVVK), and 253–324 (NLHS…SLVG). Residues M266, G268, G270, and D310 each coordinate Ca(2+).

It belongs to the annexin family.

In terms of biological role, this protein is an anticoagulant protein that acts as an indirect inhibitor of the thromboplastin-specific complex, which is involved in the blood coagulation cascade. The polypeptide is Annexin A8 (ANXA8) (Pan troglodytes (Chimpanzee)).